A 584-amino-acid chain; its full sequence is MRSIISAFILSLNFCTQPLVRGAPSAADWQELQKAVEGRLFTAEPLARPCFSTFQGKSVEPNVEECSTTKQHYLNSTFKTAAYAGFVHSYNEACASNVTDQCLLSADTFSTNGKNTSGTAPLTGPCNLGMLSEKYIAVSRAEDVQAAFRFAHRTGMPLSVKATGHDYAARSSLKGSLALWTRQLNDIAFNPSFTPVGGSSSPIAAMTVGGGANLGEVYKFADRHNVTFIGGSSGTVAAAGGYSLLGGHGTLTPTYGMGADRMLEATIVTPDGELRIANAHMNSDLFWALRGAGSATFGVVLNATFKVEPVMPLTLALMSFNSTGANTGPFLSLLMKHTNIWAEEGWGGPMSMSTLALVNPAMSVDAAKQSMKEVADYVSAQGGTVVLESLPSFYAFYTKYVEAASSTGTGAATFATFRTLPKRLHQSEEGRAAMTKTFRDIKAAGHDTFIFQTTPNKFPYEPGSNAVHPSWRDSYWLVGTSISWSSNDAGLEERMRVAAAVQEVSKNLTDLAPEGSMYPNEADPWTRNWAKEFWGEENYARLVQVKRKYDPHGLIGCWKCVGFEDKLMETESAFRCLGAFQKKR.

An N-terminal signal peptide occupies residues 1–22 (MRSIISAFILSLNFCTQPLVRG). Residues Asn-75, Asn-97, Asn-115, Asn-225, Asn-302, Asn-321, and Asn-507 are each glycosylated (N-linked (GlcNAc...) asparagine). The FAD-binding PCMH-type domain occupies 128–310 (LGMLSEKYIA…LNATFKVEPV (183 aa)).

Belongs to the oxygen-dependent FAD-linked oxidoreductase family. Requires FAD as cofactor.

Its pathway is secondary metabolite biosynthesis. Functionally, FAD-linked oxidoreductase; part of the gene cluster that mediates the biosynthesis of a tyrosine-derived cytochalasan acting as a fungal signal recognized by resistant rice plants and leads to avirulence in Pi33 resistant rice cultivars. The first step in the pathway is catalyzed by the hybrid PKS-NRPS ACE1, assisted by the enoyl reductase RAP1, that are responsible for fusion of the tyrosine precursor and the polyketide backbone. The polyketide synthase module (PKS) of ACE1 is responsible for the synthesis of the polyketide backbone and the downstream nonribosomal peptide synthetase (NRPS) amidates the carboxyl end of the polyketide with the tyrosine precursor. Because ACE1 lacks a designated enoylreductase (ER) domain, the required activity is provided the enoyl reductase RAP1. Reduction by the hydrolyase ORFZ, followed by dehydration and intra-molecular Diels-Alder cyclization by the Diels-Alderase ORF3 then yield the required isoindolone-fused macrocycle. A number of oxidative steps catalyzed by the tailoring enzymes identified within the cluster, including cytochrome P450 monooxygenases CYP1 to CYP4, the FAD-linked oxidoreductase OXR2 and the short-chain dehydrogenase/reductase OXR1, are further required to afford the final cytochalasans that confer avirulence and which have still to be identified. The monooxygenase CYP1 has been shown to be a site-selective C-18 hydroxylase whereas the function of CYP3 is the site-selective epoxidation of the C-6/C-7 olefin that is present in some intermediate compounds. Finally, SYN2 and RAP2 are not required for avirulence in Pi33 resistant rice cultivars. The polypeptide is FAD-linked oxidoreductase OXR2 (Pyricularia oryzae (strain 70-15 / ATCC MYA-4617 / FGSC 8958) (Rice blast fungus)).